A 369-amino-acid chain; its full sequence is Glutamate 5-kinase (369 aa).

Lys-9 serves as a coordination point for ATP. Residues Ser-49, Asp-136, and Asn-148 each coordinate substrate. ATP-binding positions include 168-169 and 210-216; these read TD and TGGMLTK. In terms of domain architecture, PUA spans 275–355; sequence QGSIWVDKGA…KGVLIYRDDW (81 aa).

The protein belongs to the glutamate 5-kinase family.

The protein resides in the cytoplasm. The catalysed reaction is L-glutamate + ATP = L-glutamyl 5-phosphate + ADP. Its pathway is amino-acid biosynthesis; L-proline biosynthesis; L-glutamate 5-semialdehyde from L-glutamate: step 1/2. In terms of biological role, catalyzes the transfer of a phosphate group to glutamate to form L-glutamate 5-phosphate. The sequence is that of Glutamate 5-kinase from Streptococcus pneumoniae (strain 70585).